Consider the following 380-residue polypeptide: Cytochrome b (380 aa).

Transmembrane regions (helical) follow at residues 34 to 54 (FGSL…LLAM), 78 to 99 (WLIR…YLHI), 114 to 134 (WNTG…GYVL), and 179 to 199 (FFAL…IHLT). Residues H84 and H98 each contribute to the heme b site. H183 and H197 together coordinate heme b. H202 lines the a ubiquinone pocket. 4 consecutive transmembrane segments (helical) span residues 227 to 247 (LKDI…ALFS), 289 to 309 (LGGV…PLLH), 321 to 341 (LSQL…WIGS), and 348 to 368 (FIII…VLFP).

The protein belongs to the cytochrome b family. The cytochrome bc1 complex contains 11 subunits: 3 respiratory subunits (MT-CYB, CYC1 and UQCRFS1), 2 core proteins (UQCRC1 and UQCRC2) and 6 low-molecular weight proteins (UQCRH/QCR6, UQCRB/QCR7, UQCRQ/QCR8, UQCR10/QCR9, UQCR11/QCR10 and a cleavage product of UQCRFS1). This cytochrome bc1 complex then forms a dimer. It depends on heme b as a cofactor.

The protein localises to the mitochondrion inner membrane. In terms of biological role, component of the ubiquinol-cytochrome c reductase complex (complex III or cytochrome b-c1 complex) that is part of the mitochondrial respiratory chain. The b-c1 complex mediates electron transfer from ubiquinol to cytochrome c. Contributes to the generation of a proton gradient across the mitochondrial membrane that is then used for ATP synthesis. This Thalassarche impavida (Albatross) protein is Cytochrome b (MT-CYB).